Reading from the N-terminus, the 309-residue chain is Probable nitrogen assimilation transcriptional activator (309 aa).

Positions 1–57 (MRLEQLQAALRVAETGSFQEAAQKVGCNQSTISRQVKGLEDELGIALFRRQGRMKLT) constitute an HTH lysR-type domain. Positions 18–37 (FQEAAQKVGCNQSTISRQVK) form a DNA-binding region, H-T-H motif.

The protein belongs to the LysR transcriptional regulatory family.

Its function is as follows. Seems to regulate utilization of fixed nitrogen by controlling the expression of a certain gene(s) involved in nitrogen metabolism. This chain is Probable nitrogen assimilation transcriptional activator (ntcB), found in Synechococcus elongatus (strain ATCC 33912 / PCC 7942 / FACHB-805) (Anacystis nidulans R2).